The following is a 164-amino-acid chain: Serine/arginine-rich splicing factor 3 (164 aa).

The residue at position 1 (Met-1) is an N-acetylmethionine. The interval 1–90 (MHRDSCPLDC…SNGEKRSRNR (90 aa)) is sufficient for interaction with NXF1 and SRSP. Ser-5 is modified (phosphoserine). One can recognise an RRM domain in the interval 10–83 (CKVYVGNLGN…CRVRVELSNG (74 aa)). Position 23 is an N6-acetyllysine (Lys-23). The segment at 81 to 164 (SNGEKRSRNR…RSRSRSNERK (84 aa)) is disordered. A compositionally biased stretch (basic residues) spans 107-128 (RSPPPRRRSPRRRSFSRSRSRS). The stretch at 119–133 (RSFSRSRSRSLSRDR) is one B-1 repeat. Residues 119-164 (RSFSRSRSRSLSRDRRRERSLSRERNHKPSRSFSRSRSRSRSNERK) form a 2 X approximate repeats, basic region. The segment covering 129 to 142 (LSRDRRRERSLSRE) has biased composition (basic and acidic residues). Over residues 143–158 (RNHKPSRSFSRSRSRS) the composition is skewed to basic residues. One copy of the B-2 repeat lies at 149-164 (RSFSRSRSRSRSNERK).

It belongs to the splicing factor SR family. Interacts with CPSF6. Interacts with RBMY1A1. Interacts with SREK1/SFRS12. Interacts with NXF1. Interacts with YTHDC1, leading to recruitment to RNA elements adjacent to m6A sites. Interacts with SRSP; increases SRSF3 binding to specific exons. Post-translationally, phosphorylated by CLK1, CLK2, CLK3 and CLK4. Extensively phosphorylated on serine residues in the RS domain.

The protein resides in the nucleus. The protein localises to the nucleus speckle. It localises to the cytoplasm. In terms of biological role, splicing factor, which binds the consensus motif 5'-C[ACU][AU]C[ACU][AC]C-3' within pre-mRNA and promotes specific exons inclusion during alternative splicing. Interaction with YTHDC1, a RNA-binding protein that recognizes and binds N6-methyladenosine (m6A)-containing RNAs, promotes recruitment of SRSF3 to its mRNA-binding elements adjacent to m6A sites within exons. Also functions as an adapter involved in mRNA nuclear export. Binds mRNA which is thought to be transferred to the NXF1-NXT1 heterodimer for export (TAP/NXF1 pathway); enhances NXF1-NXT1 RNA-binding activity. Involved in nuclear export of m6A-containing mRNAs via interaction with YTHDC1: interaction with YTHDC1 facilitates m6A-containing mRNA-binding to both SRSF3 and NXF1, promoting mRNA nuclear export. The chain is Serine/arginine-rich splicing factor 3 (SRSF3) from Bos taurus (Bovine).